Here is a 284-residue protein sequence, read N- to C-terminus: Tropomyosin beta chain (284 aa).

Methionine 1 bears the N-acetylmethionine mark. A disordered region spans residues methionine 1–lysine 65. Residues methionine 1–leucine 284 adopt a coiled-coil conformation. 2 stretches are compositionally biased toward basic and acidic residues: residues lysine 12–glutamate 40 and lysine 51–lysine 65. The residue at position 53 (threonine 53) is a Phosphothreonine. The residue at position 61 (serine 61) is a Phosphoserine; by PIK3CG. Position 79 is a phosphothreonine (threonine 79). Phosphoserine is present on serine 87. A Phosphothreonine modification is found at threonine 108. The disordered stretch occupies residues glutamate 117 to lysine 136. Residues serine 158, serine 206, and serine 215 each carry the phosphoserine modification. A Phosphothreonine modification is found at threonine 252. Residue tyrosine 261 is modified to Phosphotyrosine. At serine 271 the chain carries Phosphoserine. At threonine 282 the chain carries Phosphothreonine. At serine 283 the chain carries Phosphoserine.

It belongs to the tropomyosin family. As to quaternary structure, homodimer. Heterodimer of an alpha (TPM1, TPM3 or TPM4) and a beta (TPM2) chain. Phosphorylated on Ser-61 by PIK3CG. Phosphorylation on Ser-61 is required for ADRB2 internalization. As to expression, present in primary breast cancer tissue, absent from normal breast tissue.

It localises to the cytoplasm. The protein resides in the cytoskeleton. In terms of biological role, binds to actin filaments in muscle and non-muscle cells. Plays a central role, in association with the troponin complex, in the calcium dependent regulation of vertebrate striated muscle contraction. Smooth muscle contraction is regulated by interaction with caldesmon. In non-muscle cells is implicated in stabilizing cytoskeleton actin filaments. The non-muscle isoform may have a role in agonist-mediated receptor internalization. The protein is Tropomyosin beta chain (TPM2) of Homo sapiens (Human).